A 396-amino-acid polypeptide reads, in one-letter code: L-lactate dehydrogenase (396 aa).

Residues 1–380 (MIISAASDYR…TQDSLVQELS (380 aa)) form the FMN hydroxy acid dehydrogenase domain. Residue tyrosine 24 participates in substrate binding. FMN-binding residues include serine 106 and glutamine 127. Residue tyrosine 129 participates in substrate binding. Threonine 155 is a binding site for FMN. Arginine 164 is a binding site for substrate. Lysine 251 provides a ligand contact to FMN. Histidine 275 acts as the Proton acceptor in catalysis. Substrate is bound at residue arginine 278. 306-330 (DSGIRNGLDVVRMIALGADTVLLGR) lines the FMN pocket.

This sequence belongs to the FMN-dependent alpha-hydroxy acid dehydrogenase family. FMN is required as a cofactor.

It localises to the cell inner membrane. It catalyses the reaction (S)-lactate + A = pyruvate + AH2. In terms of biological role, catalyzes the conversion of L-lactate to pyruvate. Is coupled to the respiratory chain. The sequence is that of L-lactate dehydrogenase from Escherichia coli (strain SMS-3-5 / SECEC).